The following is a 233-amino-acid chain: Probable septum site-determining protein MinC (233 aa).

The interval 104 to 124 (QKMATPEPAPAPAPVVDPNAP) is disordered.

It belongs to the MinC family. Interacts with MinD and FtsZ.

Its function is as follows. Cell division inhibitor that blocks the formation of polar Z ring septums. Rapidly oscillates between the poles of the cell to destabilize FtsZ filaments that have formed before they mature into polar Z rings. Prevents FtsZ polymerization. This Serratia proteamaculans (strain 568) protein is Probable septum site-determining protein MinC.